The chain runs to 162 residues: G/U mismatch-specific DNA glycosylase (162 aa).

It belongs to the uracil-DNA glycosylase (UDG) superfamily. TDG/mug family. As to quaternary structure, binds DNA as a monomer.

It is found in the cytoplasm. The catalysed reaction is Specifically hydrolyzes mismatched double-stranded DNA and polynucleotides, releasing free uracil.. Excises ethenocytosine and uracil, which can arise by alkylation or deamination of cytosine, respectively, from the corresponding mispairs with guanine in ds-DNA. It is capable of hydrolyzing the carbon-nitrogen bond between the sugar-phosphate backbone of the DNA and the mispaired base. The complementary strand guanine functions in substrate recognition. Required for DNA damage lesion repair in stationary-phase cells. This is G/U mismatch-specific DNA glycosylase from Serratia proteamaculans (strain 568).